A 396-amino-acid polypeptide reads, in one-letter code: S-adenosylmethionine synthase (396 aa).

Position 15 (H15) interacts with ATP. A Mg(2+)-binding site is contributed by D17. Residue E43 participates in K(+) binding. Residues E56 and Q99 each contribute to the L-methionine site. The segment at 99–109 (QSSDIAMGVDK) is flexible loop. ATP contacts are provided by residues 175-177 (DGK), 241-242 (RF), D250, 256-257 (RK), A273, and K277. D250 is an L-methionine binding site. K281 lines the L-methionine pocket.

This sequence belongs to the AdoMet synthase family. Homotetramer; dimer of dimers. Mg(2+) is required as a cofactor. It depends on K(+) as a cofactor.

The protein localises to the cytoplasm. It catalyses the reaction L-methionine + ATP + H2O = S-adenosyl-L-methionine + phosphate + diphosphate. Its pathway is amino-acid biosynthesis; S-adenosyl-L-methionine biosynthesis; S-adenosyl-L-methionine from L-methionine: step 1/1. Its function is as follows. Catalyzes the formation of S-adenosylmethionine (AdoMet) from methionine and ATP. The overall synthetic reaction is composed of two sequential steps, AdoMet formation and the subsequent tripolyphosphate hydrolysis which occurs prior to release of AdoMet from the enzyme. In Ruminiclostridium cellulolyticum (strain ATCC 35319 / DSM 5812 / JCM 6584 / H10) (Clostridium cellulolyticum), this protein is S-adenosylmethionine synthase.